The following is a 198-amino-acid chain: Segregation and condensation protein B (198 aa).

Residues 169 to 198 (LADPAAEEPDQNEMDLFFDRFNQSKEQEEE) form a disordered region.

Belongs to the ScpB family. Homodimer. Homodimerization may be required to stabilize the binding of ScpA to the Smc head domains. Component of a cohesin-like complex composed of ScpA, ScpB and the Smc homodimer, in which ScpA and ScpB bind to the head domain of Smc. The presence of the three proteins is required for the association of the complex with DNA.

Its subcellular location is the cytoplasm. Its function is as follows. Participates in chromosomal partition during cell division. May act via the formation of a condensin-like complex containing Smc and ScpA that pull DNA away from mid-cell into both cell halves. The protein is Segregation and condensation protein B of Listeria monocytogenes serotype 4a (strain HCC23).